Here is a 449-residue protein sequence, read N- to C-terminus: UDP-N-acetylmuramoylalanine--D-glutamate ligase (449 aa).

ATP is bound at residue 116–122 (GSNGKST).

The protein belongs to the MurCDEF family.

The protein resides in the cytoplasm. It catalyses the reaction UDP-N-acetyl-alpha-D-muramoyl-L-alanine + D-glutamate + ATP = UDP-N-acetyl-alpha-D-muramoyl-L-alanyl-D-glutamate + ADP + phosphate + H(+). The protein operates within cell wall biogenesis; peptidoglycan biosynthesis. Its function is as follows. Cell wall formation. Catalyzes the addition of glutamate to the nucleotide precursor UDP-N-acetylmuramoyl-L-alanine (UMA). This chain is UDP-N-acetylmuramoylalanine--D-glutamate ligase, found in Shewanella violacea (strain JCM 10179 / CIP 106290 / LMG 19151 / DSS12).